A 194-amino-acid chain; its full sequence is CASP-like protein Ni6 (194 aa).

Residues methionine 1 to arginine 27 lie on the Cytoplasmic side of the membrane. Residues valine 28–methionine 48 form a helical membrane-spanning segment. The Extracellular portion of the chain corresponds to valine 49 to alanine 75. The chain crosses the membrane as a helical span at residues phenylalanine 76 to valine 96. At serine 97–lysine 109 the chain is on the cytoplasmic side. Residues leucine 110–glycine 130 traverse the membrane as a helical segment. The Extracellular segment spans residues threonine 131–histidine 161. The chain crosses the membrane as a helical span at residues valine 162–valine 182. At asparagine 183 to tyrosine 194 the chain is on the cytoplasmic side.

This sequence belongs to the Casparian strip membrane proteins (CASP) family. As to quaternary structure, homodimer and heterodimers.

The protein localises to the cell membrane. The sequence is that of CASP-like protein Ni6 (Ni6) from Beta vulgaris subsp. maritima (Sea beet).